The primary structure comprises 337 residues: Ketol-acid reductoisomerase (NADP(+)) (337 aa).

The region spanning 3–183 (VEMFYDDDAD…GGARAGVIKT (181 aa)) is the KARI N-terminal Rossmann domain. Residues 26 to 29 (YGSQ), Lys-49, Ser-52, Ser-54, and 84 to 87 (DTAQ) contribute to the NADP(+) site. His-109 is an active-site residue. Gly-135 lines the NADP(+) pocket. Positions 184 to 329 (TFKEETETDL…KKLRDLMSWV (146 aa)) constitute a KARI C-terminal knotted domain. Mg(2+) is bound by residues Asp-192, Glu-196, Glu-228, and Glu-232. Ser-253 serves as a coordination point for substrate.

The protein belongs to the ketol-acid reductoisomerase family. It depends on Mg(2+) as a cofactor.

It catalyses the reaction (2R)-2,3-dihydroxy-3-methylbutanoate + NADP(+) = (2S)-2-acetolactate + NADPH + H(+). The catalysed reaction is (2R,3R)-2,3-dihydroxy-3-methylpentanoate + NADP(+) = (S)-2-ethyl-2-hydroxy-3-oxobutanoate + NADPH + H(+). It functions in the pathway amino-acid biosynthesis; L-isoleucine biosynthesis; L-isoleucine from 2-oxobutanoate: step 2/4. The protein operates within amino-acid biosynthesis; L-valine biosynthesis; L-valine from pyruvate: step 2/4. In terms of biological role, involved in the biosynthesis of branched-chain amino acids (BCAA). Catalyzes an alkyl-migration followed by a ketol-acid reduction of (S)-2-acetolactate (S2AL) to yield (R)-2,3-dihydroxy-isovalerate. In the isomerase reaction, S2AL is rearranged via a Mg-dependent methyl migration to produce 3-hydroxy-3-methyl-2-ketobutyrate (HMKB). In the reductase reaction, this 2-ketoacid undergoes a metal-dependent reduction by NADPH to yield (R)-2,3-dihydroxy-isovalerate. The chain is Ketol-acid reductoisomerase (NADP(+)) from Mycobacterium sp. (strain JLS).